We begin with the raw amino-acid sequence, 399 residues long: Chorismate synthase (399 aa).

The tract at residues 41–72 (IQKDLDRRKPGQSMITTSRGEPDKVTINSGIQ) is disordered. R48 is an NADP(+) binding site. FMN-binding positions include 125–127 (RSS), G288, 303–307 (HAPVS), and R330. 2 stretches are compositionally biased toward basic and acidic residues: residues 363–377 (PDRLDGRPGEYDTDY) and 389–399 (ADTHAKTIDDD). The disordered stretch occupies residues 363–399 (PDRLDGRPGEYDTDYHPSSPQNDPEDADTHAKTIDDD).

Belongs to the chorismate synthase family. FMNH2 serves as cofactor.

It catalyses the reaction 5-O-(1-carboxyvinyl)-3-phosphoshikimate = chorismate + phosphate. Its pathway is metabolic intermediate biosynthesis; chorismate biosynthesis; chorismate from D-erythrose 4-phosphate and phosphoenolpyruvate: step 7/7. Its function is as follows. Catalyzes the anti-1,4-elimination of the C-3 phosphate and the C-6 proR hydrogen from 5-enolpyruvylshikimate-3-phosphate (EPSP) to yield chorismate, which is the branch point compound that serves as the starting substrate for the three terminal pathways of aromatic amino acid biosynthesis. This reaction introduces a second double bond into the aromatic ring system. The polypeptide is Chorismate synthase (Haloarcula marismortui (strain ATCC 43049 / DSM 3752 / JCM 8966 / VKM B-1809) (Halobacterium marismortui)).